The sequence spans 658 residues: Transcription factor cep-1 (658 aa).

The DNA-binding element occupies 238–428 (EEWLTFEVKK…RDWKNFCEKR (191 aa)). Zn(2+) is bound by residues Cys-319, His-322, Cys-375, and Cys-379. The disordered stretch occupies residues 450 to 477 (QSSLHSGPSSPEKVTDTSQMFQSTSSSS). Positions 466–476 (TSQMFQSTSSS) are enriched in low complexity. The interval 535-564 (QYGLQRQVKLSEKEYSKFVAFFAKEGENEI) is required for tertiary structure stability of the protein.

Belongs to the p53 family. Homodimer. Interacts (via C-terminus domain) with prmt-5; not methylated by prmt-5. Interacts with cbp-1 (via HAT domain); cep-1 transcriptional activity may be inhibited by interaction with methylated cbp-1. Component of a complex that contains prmt-5 and cbp-1. Interacts with ape-1; the interaction inhibits pro-apoptotic activity of cep-1. Zn(2+) is required as a cofactor. Post-translationally, phosphorylated in response to IR-induced DNA damage which is thought to be mediated by akt-1.

It is found in the nucleus. Transcriptional activator that binds the same DNA consensus sequence as p53. Has a role in normal development to ensure proper meiotic chromosome segregation. Promotes apoptosis under conditions of cellular and genotoxic stress in response to DNA damage, hypoxia, or starvation. However, not required for DNA repair in response to UV-C or to regulate cell-cycle progression. Regulates germline apoptosis in response to DNA damage. Required for induction of ced-13 in response to DNA damage. Its pro-apoptotic activity is inhibited when bound to ape-1 in vitro. Regulates germline proliferation by activating phg-1. Regulates DNA damage-induced apoptosis by inducing transcription of the programmed cell death activator egl-1. Negatively regulates lifespan. This chain is Transcription factor cep-1, found in Caenorhabditis briggsae.